The sequence spans 198 residues: NADH-quinone oxidoreductase subunit B (198 aa).

Residues Cys-62, Cys-63, Cys-128, and Cys-158 each coordinate [4Fe-4S] cluster.

This sequence belongs to the complex I 20 kDa subunit family. As to quaternary structure, NDH-1 is composed of 14 different subunits. Subunits NuoB, C, D, E, F, and G constitute the peripheral sector of the complex. It depends on [4Fe-4S] cluster as a cofactor.

The protein resides in the cell inner membrane. The enzyme catalyses a quinone + NADH + 5 H(+)(in) = a quinol + NAD(+) + 4 H(+)(out). In terms of biological role, NDH-1 shuttles electrons from NADH, via FMN and iron-sulfur (Fe-S) centers, to quinones in the respiratory chain. The immediate electron acceptor for the enzyme in this species is believed to be a menaquinone. Couples the redox reaction to proton translocation (for every two electrons transferred, four hydrogen ions are translocated across the cytoplasmic membrane), and thus conserves the redox energy in a proton gradient. The chain is NADH-quinone oxidoreductase subunit B from Phocaeicola vulgatus (strain ATCC 8482 / DSM 1447 / JCM 5826 / CCUG 4940 / NBRC 14291 / NCTC 11154) (Bacteroides vulgatus).